Reading from the N-terminus, the 261-residue chain is Indole-3-glycerol phosphate synthase (261 aa).

It belongs to the TrpC family.

It carries out the reaction 1-(2-carboxyphenylamino)-1-deoxy-D-ribulose 5-phosphate + H(+) = (1S,2R)-1-C-(indol-3-yl)glycerol 3-phosphate + CO2 + H2O. It participates in amino-acid biosynthesis; L-tryptophan biosynthesis; L-tryptophan from chorismate: step 4/5. The protein is Indole-3-glycerol phosphate synthase of Alkaliphilus metalliredigens (strain QYMF).